Here is a 159-residue protein sequence, read N- to C-terminus: 2-C-methyl-D-erythritol 2,4-cyclodiphosphate synthase (159 aa).

2 residues coordinate a divalent metal cation: aspartate 9 and histidine 11. 4-CDP-2-C-methyl-D-erythritol 2-phosphate is bound by residues aspartate 9–histidine 11 and histidine 35–serine 36. A divalent metal cation is bound at residue histidine 43. 4-CDP-2-C-methyl-D-erythritol 2-phosphate contacts are provided by residues aspartate 57 to glycine 59, phenylalanine 62 to aspartate 66, threonine 133 to glutamate 136, phenylalanine 140, and arginine 143.

The protein belongs to the IspF family. In terms of assembly, homotrimer. It depends on a divalent metal cation as a cofactor.

It catalyses the reaction 4-CDP-2-C-methyl-D-erythritol 2-phosphate = 2-C-methyl-D-erythritol 2,4-cyclic diphosphate + CMP. Its pathway is isoprenoid biosynthesis; isopentenyl diphosphate biosynthesis via DXP pathway; isopentenyl diphosphate from 1-deoxy-D-xylulose 5-phosphate: step 4/6. Its function is as follows. Involved in the biosynthesis of isopentenyl diphosphate (IPP) and dimethylallyl diphosphate (DMAPP), two major building blocks of isoprenoid compounds. Catalyzes the conversion of 4-diphosphocytidyl-2-C-methyl-D-erythritol 2-phosphate (CDP-ME2P) to 2-C-methyl-D-erythritol 2,4-cyclodiphosphate (ME-CPP) with a corresponding release of cytidine 5-monophosphate (CMP). In Shouchella clausii (strain KSM-K16) (Alkalihalobacillus clausii), this protein is 2-C-methyl-D-erythritol 2,4-cyclodiphosphate synthase.